Here is a 232-residue protein sequence, read N- to C-terminus: Octanoyltransferase (232 aa).

A BPL/LPL catalytic domain is found at 43 to 231 (DQTPNYFLFV…HFTQLFDCTV (189 aa)). Substrate-binding positions include 88–95 (RGGDITYH), 160–162 (ALG), and 173–175 (GFA). Cys-191 acts as the Acyl-thioester intermediate in catalysis.

This sequence belongs to the LipB family.

The protein resides in the cytoplasm. The catalysed reaction is octanoyl-[ACP] + L-lysyl-[protein] = N(6)-octanoyl-L-lysyl-[protein] + holo-[ACP] + H(+). The protein operates within protein modification; protein lipoylation via endogenous pathway; protein N(6)-(lipoyl)lysine from octanoyl-[acyl-carrier-protein]: step 1/2. Catalyzes the transfer of endogenously produced octanoic acid from octanoyl-acyl-carrier-protein onto the lipoyl domains of lipoate-dependent enzymes. Lipoyl-ACP can also act as a substrate although octanoyl-ACP is likely to be the physiological substrate. In Flavobacterium psychrophilum (strain ATCC 49511 / DSM 21280 / CIP 103535 / JIP02/86), this protein is Octanoyltransferase.